The chain runs to 229 residues: MSLLEQLDKNIAASGGLIVSCQPVPGSPLDKPEIVAAMALAAEQAGAVAVRIEGIDNLRMTRSLVSVPIIGIIKRDLDESPVRITPFLDDVDALAQAGAAIIAVDGTARQRPVAVEALLARIHHHHLLAMADCSSVDDGLACQRLGADIIGTTMSGYTTPDTPEEPDLPLVKALHDAGCRVIAEGRYNSPALAAEAIRYGAWAVTVGSAITRLEHICGWYNDALKKAAS.

It belongs to the NanE family.

It catalyses the reaction an N-acyl-D-glucosamine 6-phosphate = an N-acyl-D-mannosamine 6-phosphate. The protein operates within amino-sugar metabolism; N-acetylneuraminate degradation; D-fructose 6-phosphate from N-acetylneuraminate: step 3/5. Converts N-acetylmannosamine-6-phosphate (ManNAc-6-P) to N-acetylglucosamine-6-phosphate (GlcNAc-6-P). The protein is Putative N-acetylmannosamine-6-phosphate 2-epimerase 2 (nanE2) of Salmonella typhimurium (strain LT2 / SGSC1412 / ATCC 700720).